A 27-amino-acid chain; its full sequence is Cupiennin-3b (27 aa).

A Glutamic acid 1-amide modification is found at Glu-27.

As to expression, expressed by the venom gland.

Its subcellular location is the secreted. This chain is Cupiennin-3b, found in Cupiennius salei (American wandering spider).